Here is a 468-residue protein sequence, read N- to C-terminus: Heparan-sulfate 6-O-sulfotransferase 2 (468 aa).

Topologically, residues 1–9 (MDGKSNYSR) are cytoplasmic. The chain crosses the membrane as a helical; Signal-anchor for type II membrane protein span at residues 10-30 (LLIALLMILFFGGIVLQYICS). The Lumenal portion of the chain corresponds to 31-468 (TSDWQLLHLA…DYLENVEQWR (438 aa)). N-linked (GlcNAc...) asparagine glycosylation occurs at Asn-79. Residue 103 to 111 (HIQKTGGTT) coordinates 3'-phosphoadenylyl sulfate. Residues 133–134 (KK), Arg-150, Trp-155, and His-160 each bind substrate. His-160 serves as the catalytic Proton acceptor. Arg-197 and Ser-205 together coordinate 3'-phosphoadenylyl sulfate. Residues His-209 and Trp-216 each contribute to the substrate site. Asn-276 carries N-linked (GlcNAc...) asparagine glycosylation. 329–331 (TQL) serves as a coordination point for 3'-phosphoadenylyl sulfate. N-linked (GlcNAc...) asparagine glycosylation occurs at Asn-332. 335 to 336 (RA) provides a ligand contact to 3'-phosphoadenylyl sulfate. Residues 409 to 447 (FKPTKEPPMTEQSPAFAEEKQADAERTLESETEGQVEEN) form a disordered region. Positions 425–437 (AEEKQADAERTLE) are enriched in basic and acidic residues. The segment covering 438–447 (SETEGQVEEN) has biased composition (acidic residues).

The protein belongs to the sulfotransferase 6 family. As to expression, expressed ubiquitously during gastrulation. During early somitogenesis, strong expression in head and presumptive brain. During mid-somitogenesis, strong expression in eye, hindbrain and somitic boundaries and weak expression in tail bud. During late somitogenesis, strong expression in eye, hindbrain, branchial arch primordia, spinal cord and ventral medial somites. At 24 hours post-fertilization (hpf), strong expression throughout the head, with expression receeding from the trunk spinal cord, ventral medial somites and somitic boundaries; expressed in cells surrounding vascular structures of the dorsal aorta and caudal vein in the tail. At 36 hpf, expressed in lens, optic stalk, hindbrain and pectoral fin. At 48 hpf, expressed in eye, brain, otic vesicle and branchial arches.

The protein resides in the membrane. It catalyses the reaction alpha-D-glucosaminyl-[heparan sulfate](n) + 3'-phosphoadenylyl sulfate = 6-sulfo-alpha-D-glucosaminyl-[heparan sulfate](n) + adenosine 3',5'-bisphosphate + H(+). In terms of biological role, 6-O-sulfation enzyme which catalyzes the transfer of sulfate from 3'-phosphoadenosine 5'-phosphosulfate (PAPS) to position 6 of the N-sulfoglucosamine residue (GlcNS) of heparan sulfate. Required for muscle development and angiogenesis. This Danio rerio (Zebrafish) protein is Heparan-sulfate 6-O-sulfotransferase 2 (hs6st2).